The sequence spans 217 residues: Proteasome subunit beta type-6-B like protein (217 aa).

Residues 1-16 (MERHFMDSQIKGVSTG) constitute a propeptide, removed in mature form. Residue T17 is the Nucleophile of the active site.

Belongs to the peptidase T1B family. As to quaternary structure, the 26S proteasome consists of a 20S proteasome core and two 19S regulatory subunits. The 20S proteasome core is composed of 28 subunits that are arranged in four stacked rings, resulting in a barrel-shaped structure. The two end rings are each formed by seven alpha subunits, and the two central rings are each formed by seven beta subunits. The catalytic chamber with the active sites is on the inside of the barrel.

Its subcellular location is the cytoplasm. It is found in the nucleus. It catalyses the reaction Cleavage of peptide bonds with very broad specificity.. The proteasome is a multicatalytic proteinase complex which is characterized by its ability to cleave peptides with Arg, Phe, Tyr, Leu, and Glu adjacent to the leaving group at neutral or slightly basic pH. The proteasome has an ATP-dependent proteolytic activity. This subunit is involved in antigen processing to generate class I binding peptides. This is Proteasome subunit beta type-6-B like protein (psmb6l-b) from Salmo salar (Atlantic salmon).